The chain runs to 354 residues: Anthranilate phosphoribosyltransferase (354 aa).

This sequence belongs to the anthranilate phosphoribosyltransferase family.

It carries out the reaction N-(5-phospho-beta-D-ribosyl)anthranilate + diphosphate = 5-phospho-alpha-D-ribose 1-diphosphate + anthranilate. Its pathway is amino-acid biosynthesis; L-tryptophan biosynthesis; L-tryptophan from chorismate: step 2/5. In Schizosaccharomyces pombe (strain 972 / ATCC 24843) (Fission yeast), this protein is Anthranilate phosphoribosyltransferase (trp4).